The primary structure comprises 222 residues: Large ribosomal subunit protein uL1 (222 aa).

It belongs to the universal ribosomal protein uL1 family. In terms of assembly, part of the 50S ribosomal subunit.

Binds directly to 23S rRNA. Probably involved in E site tRNA release. In terms of biological role, protein L1 is also a translational repressor protein, it controls the translation of its operon by binding to its mRNA. This chain is Large ribosomal subunit protein uL1, found in Pyrobaculum aerophilum (strain ATCC 51768 / DSM 7523 / JCM 9630 / CIP 104966 / NBRC 100827 / IM2).